A 462-amino-acid chain; its full sequence is Tissue alpha-L-fucosidase (462 aa).

Positions methionine 1–leucine 28 are cleaved as a signal peptide. 3 N-linked (GlcNAc...) asparagine glycosylation sites follow: asparagine 237, asparagine 264, and asparagine 378.

The protein belongs to the glycosyl hydrolase 29 family. As to quaternary structure, homotetramer.

It is found in the lysosome. It carries out the reaction an alpha-L-fucoside + H2O = L-fucose + an alcohol. The catalysed reaction is a neolactoside IV(2)-alpha-Fuc-nLc4Cer(d18:1(4E)) + H2O = a neolactoside nLc4Cer(d18:1(4E)) + L-fucose. It catalyses the reaction a neolactoside IV(2)-alpha-Fuc-nLc4Cer(d18:0) + H2O = a neolactoside nLc4Cer(d18:0) + L-fucose. Alpha-L-fucosidase is responsible for hydrolyzing the alpha-1,6-linked fucose joined to the reducing-end N-acetylglucosamine of the carbohydrate moieties of glycoproteins. This chain is Tissue alpha-L-fucosidase (Fuca1), found in Rattus norvegicus (Rat).